The primary structure comprises 396 residues: Deoxyguanosinetriphosphate triphosphohydrolase-like protein (396 aa).

Residues 62–198 (RLTHSLEVAQ…AALADDIAYN (137 aa)) form the HD domain.

Belongs to the dGTPase family. Type 2 subfamily.

The protein is Deoxyguanosinetriphosphate triphosphohydrolase-like protein of Jannaschia sp. (strain CCS1).